A 251-amino-acid chain; its full sequence is Triosephosphate isomerase (251 aa).

N9–K11 lines the substrate pocket. The Electrophile role is filled by H95. The active-site Proton acceptor is E167. Residues G173, S213, and G234–G235 contribute to the substrate site.

Belongs to the triosephosphate isomerase family. As to quaternary structure, homodimer.

Its subcellular location is the cytoplasm. It catalyses the reaction D-glyceraldehyde 3-phosphate = dihydroxyacetone phosphate. It functions in the pathway carbohydrate biosynthesis; gluconeogenesis. Its pathway is carbohydrate degradation; glycolysis; D-glyceraldehyde 3-phosphate from glycerone phosphate: step 1/1. Involved in the gluconeogenesis. Catalyzes stereospecifically the conversion of dihydroxyacetone phosphate (DHAP) to D-glyceraldehyde-3-phosphate (G3P). The chain is Triosephosphate isomerase from Lacticaseibacillus casei (strain BL23) (Lactobacillus casei).